A 289-amino-acid chain; its full sequence is BTB/POZ domain-containing protein KCTD7 (289 aa).

The disordered stretch occupies residues 1-40 (MVVVTGREPDSRRPDGAMSSSDAEDDFLEPATPTATQAGH). The BTB domain occupies 53 to 141 (VPLNIGGAHF…YAIGPLLEQL (89 aa)).

In terms of assembly, interacts with CUL3.

The protein localises to the cell membrane. It is found in the cytoplasm. It localises to the cytosol. Functionally, may be involved in the control of excitability of cortical neurons. The chain is BTB/POZ domain-containing protein KCTD7 (KCTD7) from Bos taurus (Bovine).